A 534-amino-acid chain; its full sequence is Cytochrome c oxidase subunit 1 (534 aa).

Residues 1–14 (MVQRWLYSTNAKDI) are Mitochondrial matrix-facing. The helical transmembrane segment at 15-39 (AVLYFMLAIFSGMAGTAMSLIIRLE) threads the bilayer. Positions 39, 42, and 44 each coordinate Ca(2+). The Mitochondrial intermembrane portion of the chain corresponds to 40–54 (LAAPGSQYLHGNSQL). Residues 55 to 88 (FNVLVVGHAVLMIFFLVMPALIGGFGNYLLPLMI) traverse the membrane as a helical segment. Fe(II)-heme a is bound at residue His62. Over 89-97 (GATDTAFPR) the chain is Mitochondrial matrix. Residues 98-118 (INNIAFWVLPMGLVCLVTSTL) form a helical membrane-spanning segment. Over 119–142 (VESGAGTGWTVYPPLSSIQAHSGP) the chain is Mitochondrial intermembrane. The helical transmembrane segment at 143–171 (SVDLAIFALHLTSISSLLGAINFIVTTLN) threads the bilayer. Residues 172–183 (MRTNGMTMHKLP) are Mitochondrial matrix-facing. Residues 184–215 (LFVWSIFITAFLLLLSLPVLSAGITMLLLDRN) form a helical membrane-spanning segment. Residues 216–228 (FNTSFFEVSGGGD) lie on the Mitochondrial intermembrane side of the membrane. A helical membrane pass occupies residues 229-263 (PILYEHLFWFFGHPEVYILIIPGFGIISHVVSTYS). His241 lines the Cu cation pocket. The segment at residues 241 to 245 (HPEVY) is a cross-link (1'-histidyl-3'-tyrosine (His-Tyr)). Tyr245 provides a ligand contact to O2. The Mitochondrial matrix portion of the chain corresponds to 264–269 (KKPVFG). A helical transmembrane segment spans residues 270–295 (EISMVYAMASIGLLGFLVWSHHMYIV). Cu cation-binding residues include His290 and His291. Residues 296-298 (GLD) lie on the Mitochondrial intermembrane side of the membrane. The chain crosses the membrane as a helical span at residues 299–327 (ADTRAYFTSATMIIAIPTGIKIFSWLATI). Residues 328–335 (HGGSIRLA) lie on the Mitochondrial matrix side of the membrane. Residues 336-358 (TPMLYAIAFLFLFTMGGLTGVAL) traverse the membrane as a helical segment. Topologically, residues 359–370 (ANASLDVAFHDT) are mitochondrial intermembrane. The Mg(2+) site is built by His368 and Asp369. The chain crosses the membrane as a helical span at residues 371 to 400 (YYVVGHFHYVLSMGAIFSLFAGYYYWSPQI). His376 contributes to the heme a3 binding site. Residue His378 coordinates Fe(II)-heme a. Residues 401–406 (LGLNYN) lie on the Mitochondrial matrix side of the membrane. A helical membrane pass occupies residues 407–431 (EKLAQIQFWLIFIGANVIFFPMHFL). Residues 432-449 (GINGMPRRIPDYPDAFAG) are Mitochondrial intermembrane-facing. Pro441 is a binding site for Ca(2+). Residues 450–474 (WNYVASIGSFIATLSLFLFIYILYD) form a helical membrane-spanning segment. Over 475–534 (QLVNGLNNKVNNKSVIYNKAPDFVESNTIFNLNTVKSSSIEFLLTSPPAVHSFNTPAVQS) the chain is Mitochondrial matrix.

The protein belongs to the heme-copper respiratory oxidase family. Component of the cytochrome c oxidase (complex IV, CIV), a multisubunit enzyme composed of 12 subunits. The complex is composed of a catalytic core of 3 subunits COX1, COX2 and COX3, encoded in the mitochondrial DNA, and 9 supernumerary subunits COX4, COX5A (or COX5B), COX6, COX7, COX8, COX9, COX12, COX13 and COX26, which are encoded in the nuclear genome. The complex exists as a monomer or a dimer and forms supercomplexes (SCs) in the inner mitochondrial membrane with a dimer of ubiquinol-cytochrome c oxidoreductase (cytochrome b-c1 complex, complex III, CIII), resulting in 2 different assemblies (supercomplexes III(2)IV and III(2)IV(2)). It depends on heme as a cofactor. Cu cation serves as cofactor. The N-terminus is blocked.

The protein localises to the mitochondrion inner membrane. It catalyses the reaction 4 Fe(II)-[cytochrome c] + O2 + 8 H(+)(in) = 4 Fe(III)-[cytochrome c] + 2 H2O + 4 H(+)(out). It participates in energy metabolism; oxidative phosphorylation. Component of the cytochrome c oxidase, the last enzyme in the mitochondrial electron transport chain which drives oxidative phosphorylation. The respiratory chain contains 3 multisubunit complexes succinate dehydrogenase (complex II, CII), ubiquinol-cytochrome c oxidoreductase (cytochrome b-c1 complex, complex III, CIII) and cytochrome c oxidase (complex IV, CIV), that cooperate to transfer electrons derived from NADH and succinate to molecular oxygen, creating an electrochemical gradient over the inner membrane that drives transmembrane transport and the ATP synthase. Cytochrome c oxidase is the component of the respiratory chain that catalyzes the reduction of oxygen to water. Electrons originating from reduced cytochrome c in the intermembrane space (IMS) are transferred via the dinuclear copper A center (CU(A)) of COX2 and heme A of COX1 to the active site in COX1, a binuclear center (BNC) formed by heme A3 and copper B (CU(B)). The BNC reduces molecular oxygen to 2 water molecules using 4 electrons from cytochrome c in the IMS and 4 protons from the mitochondrial matrix. COX1 is a catalytic core subunit containing heme A and the active site BNC with heme A3 and the copper atom CU(B). This chain is Cytochrome c oxidase subunit 1 (COX1), found in Saccharomyces cerevisiae (strain ATCC 204508 / S288c) (Baker's yeast).